We begin with the raw amino-acid sequence, 1141 residues long: Isoleucine--tRNA ligase (1141 aa).

The short motif at 50-60 (PSANGMPGIHH) is the 'HIGH' region element. The 'KMSKS' region motif lies at 689 to 693 (KMSKR). Lys-692 contacts ATP.

Belongs to the class-I aminoacyl-tRNA synthetase family. IleS type 2 subfamily. In terms of assembly, monomer. It depends on Zn(2+) as a cofactor.

Its subcellular location is the cytoplasm. It catalyses the reaction tRNA(Ile) + L-isoleucine + ATP = L-isoleucyl-tRNA(Ile) + AMP + diphosphate. Catalyzes the attachment of isoleucine to tRNA(Ile). As IleRS can inadvertently accommodate and process structurally similar amino acids such as valine, to avoid such errors it has two additional distinct tRNA(Ile)-dependent editing activities. One activity is designated as 'pretransfer' editing and involves the hydrolysis of activated Val-AMP. The other activity is designated 'posttransfer' editing and involves deacylation of mischarged Val-tRNA(Ile). The protein is Isoleucine--tRNA ligase of Bacteroides fragilis (strain ATCC 25285 / DSM 2151 / CCUG 4856 / JCM 11019 / LMG 10263 / NCTC 9343 / Onslow / VPI 2553 / EN-2).